The primary structure comprises 708 residues: MRVSVSLVLGVGLGCSSPALWAETESPAELEVLTVTAEAERAEGPVQGYRANRSASATRTDTRIEDIPQAISVVPRQVLDDLDSARIERALDFAGGVSRQNNFGGLTMFEYNVRGFTTSEFYRDGFSANRGYMNAPDSATIERVEILKGPASSLYGRGDPGGTVNLVTKKPQAERFARLHASAGSWDRYRSTLDLNTPLDEEGDLLYRMNLAVEDSKGFRDYADGQRLLVAPSFSWQLDPDTSLLVEAEVVRNRQVFDRGTVAPHNHLGSLPRSRFFGEPDDGKIDNNNETLQATLRHHLNEQWSLRLASHYKHGHLDGYASENSSLAADGYTLRREYRYRDFEWHDSITQLDLLGDLHTGSIRHQLLMGLEYERYHNDELILRSIPSRNPYAIDIRRPVYGQPKPPFGRDDRNHEEVDAMALNLQDQIEFNEKWRGLLGVRFDRYRQDMNATRLNNGRFRDTSSQQTQRAATPRIGVLYQATPEVGLFANASKSFKPNGGTDMAGKAFDPEEGRGYEAGVKLDLLDGRLGMTLAAFHLKKKNVLTADPSNPGYQQTAGEARSQGFDLQFSGQLTEQLRLIGAYAYIDAEVTKDENIARGSRLLNVPKHSGSLMGVYEFREGWLHGADAGAAVNYVGERAGDSSDSGFELPAYTTVDLLAHYPLASNATLGVNVNNLFDRRYYERSYNNVWVAPGEPRNLTMSLTLNY.

An N-terminal signal peptide occupies residues 1–21; that stretch reads MRVSVSLVLGVGLGCSSPALW. The TBDR plug domain maps to 63-169; that stretch reads RIEDIPQAIS…PGGTVNLVTK (107 aa). Residues 174-708 form the TBDR beta-barrel domain; it reads ERFARLHASA…NLTMSLTLNY (535 aa).

This sequence belongs to the TonB-dependent receptor family.

The protein resides in the cell outer membrane. In terms of biological role, transports the metallophore pseudopaline, which is involved in the acquisition of nickel and zinc, and thus enables bacterial growth inside the host, where metal access is limited. Is probably involved in the import of pseudopaline-metal complexes. This chain is Metal-pseudopaline receptor CntO, found in Pseudomonas aeruginosa (strain UCBPP-PA14).